A 337-amino-acid chain; its full sequence is tRNA N6-adenosine threonylcarbamoyltransferase (337 aa).

Fe cation-binding residues include His111 and His115. Residues 134-138, Asp167, Gly180, and Asn272 contribute to the substrate site; that span reads LVSGG. Asp300 is a Fe cation binding site.

Belongs to the KAE1 / TsaD family. Fe(2+) serves as cofactor.

Its subcellular location is the cytoplasm. It carries out the reaction L-threonylcarbamoyladenylate + adenosine(37) in tRNA = N(6)-L-threonylcarbamoyladenosine(37) in tRNA + AMP + H(+). Its function is as follows. Required for the formation of a threonylcarbamoyl group on adenosine at position 37 (t(6)A37) in tRNAs that read codons beginning with adenine. Is involved in the transfer of the threonylcarbamoyl moiety of threonylcarbamoyl-AMP (TC-AMP) to the N6 group of A37, together with TsaE and TsaB. TsaD likely plays a direct catalytic role in this reaction. The sequence is that of tRNA N6-adenosine threonylcarbamoyltransferase from Shewanella woodyi (strain ATCC 51908 / MS32).